A 465-amino-acid chain; its full sequence is Protein maelstrom (465 aa).

Residues 2–69 (APKKHSGFMM…ADRGKRERLN (68 aa)) constitute a DNA-binding region (HMG box). The segment at 415–440 (MRKSSKHTGPSVSTQRERNAGAWNLP) is disordered.

Belongs to the maelstrom family.

The protein localises to the cytoplasm. It is found in the nucleus. In terms of biological role, involved both in the piRNA and miRNA metabolic processes. As a component of the meiotic nuage, plays a central role during oogenesis by repressing transposable elements and preventing their mobilization, which is essential for the germline integrity. Repression of transposable elements is mediated via the piRNA metabolic process, which mediates the repression of transposable elements during meiosis by forming complexes composed of piRNAs and Piwi proteins and governs the repression of transposons. As a nuclear component, it is required for proper differentiation in the germline stem cell (GSC) lineage by repressing microRNA-7 (miR-7), thereby acting as an indirect regulator of bag-of-marbles (Bam). Acts by binding to the promoter of miR-7 gene and repressing its expression; miR-7 repression alleviates the Bam repression by miR-7, thereby allowing differentiation in the germline stem cell (GSC) lineage. This Drosophila yakuba (Fruit fly) protein is Protein maelstrom (mael).